The following is a 222-amino-acid chain: Glutathione-specific gamma-glutamylcyclotransferase 1 (222 aa).

Positions 1-22 are enriched in low complexity; it reads MKQESAAPNTPPTSQSPTPSAQ. Residues 1–24 form a disordered region; it reads MKQESAAPNTPPTSQSPTPSAQFP. 35–40 provides a ligand contact to substrate; sequence IFGYGS. The active-site Proton acceptor is E115.

The protein belongs to the gamma-glutamylcyclotransferase family. ChaC subfamily. As to quaternary structure, interacts with NOTCH1 (via extracellular region).

Its subcellular location is the cytoplasm. The protein resides in the cytosol. It is found in the golgi apparatus. It localises to the trans-Golgi network. The enzyme catalyses glutathione = L-cysteinylglycine + 5-oxo-L-proline. Catalyzes the cleavage of glutathione into 5-oxo-L-proline and a Cys-Gly dipeptide. Acts specifically on glutathione, but not on other gamma-glutamyl peptides. Glutathione depletion is an important factor for apoptosis initiation and execution. Acts as a pro-apoptotic component of the unfolded protein response pathway by mediating the pro-apoptotic effects of the ATF4-ATF3-DDIT3/CHOP cascade. Negative regulator of Notch signaling pathway involved in embryonic neurogenesis: acts by inhibiting Notch cleavage by furin, maintaining Notch in an immature inactive form, thereby promoting neurogenesis in embryos. The polypeptide is Glutathione-specific gamma-glutamylcyclotransferase 1 (Homo sapiens (Human)).